The primary structure comprises 177 residues: Adenine phosphoribosyltransferase (177 aa).

Belongs to the purine/pyrimidine phosphoribosyltransferase family. As to quaternary structure, homodimer.

It localises to the cytoplasm. It catalyses the reaction AMP + diphosphate = 5-phospho-alpha-D-ribose 1-diphosphate + adenine. It participates in purine metabolism; AMP biosynthesis via salvage pathway; AMP from adenine: step 1/1. Catalyzes a salvage reaction resulting in the formation of AMP, that is energically less costly than de novo synthesis. This Chlorobaculum parvum (strain DSM 263 / NCIMB 8327) (Chlorobium vibrioforme subsp. thiosulfatophilum) protein is Adenine phosphoribosyltransferase.